The primary structure comprises 161 residues: Regulator of ribonuclease activity A (161 aa).

Belongs to the RraA family. As to quaternary structure, homotrimer. Binds to both RNA-binding sites in the C-terminal region of Rne and to RhlB.

It is found in the cytoplasm. In terms of biological role, globally modulates RNA abundance by binding to RNase E (Rne) and regulating its endonucleolytic activity. Can modulate Rne action in a substrate-dependent manner by altering the composition of the degradosome. Modulates RNA-binding and helicase activities of the degradosome. The chain is Regulator of ribonuclease activity A from Shigella boydii serotype 18 (strain CDC 3083-94 / BS512).